Reading from the N-terminus, the 306-residue chain is Putative NylC-analogous protein (306 aa).

This sequence belongs to the peptidase S58 family.

In Agromyces sp. (strain KY5R), this protein is Putative NylC-analogous protein.